We begin with the raw amino-acid sequence, 719 residues long: Pesticidal crystal protein Cry1Ic (719 aa).

This sequence belongs to the delta endotoxin family.

Its function is as follows. Promotes colloidosmotic lysis by binding to the midgut epithelial cells of insects. In Bacillus thuringiensis, this protein is Pesticidal crystal protein Cry1Ic (cry1Ic).